The chain runs to 287 residues: Merozoite surface protein 2 (287 aa).

A signal peptide spans 1–20; the sequence is MKVIKTLSIINFFIFVTFNI. Residues N22 and N36 are each glycosylated (N-linked (GlcNAc...) asparagine). Residues 42-248 are disordered; that stretch reads SMTESNPPTG…DSQKECTDGN (207 aa). The polymorphic region stretch occupies residues 44–213; sequence TESNPPTGAS…EQTESPELQS (170 aa). Residues 54-112 are compositionally biased toward gly residues; sequence GSAGGSAGGSAGGSAGGSAGGSAGGSAGGSAGGSAGGSAGGSAGGSAGGSAGSGDGNGA. 12 consecutive repeat copies span residues 55 to 58, 59 to 62, 63 to 66, 67 to 70, 71 to 74, 75 to 78, 79 to 82, 83 to 86, 87 to 90, 91 to 94, 95 to 98, and 99 to 102. A 12 X 4 AA tandem repeats of S-A-G-G region spans residues 55-102; sequence SAGGSAGGSAGGSAGGSAGGSAGGSAGGSAGGSAGGSAGGSAGGSAGG. Low complexity predominate over residues 121 to 149; it reads SPSTPATTTTTTTTNDAEASTSTSSENPN. 2 stretches are compositionally biased toward polar residues: residues 150–180 and 187–215; these read HNNAETNQANKETQNNSNVQQDSQTKSNVPP and KSPTAQPEQAENSAPTAEQTESPELQSAP. N164 carries an N-linked (GlcNAc...) asparagine glycan. N236 is a glycosylation site (N-linked (GlcNAc...) asparagine). A disulfide bridge links C244 with C252. N-linked (GlcNAc...) asparagine glycosylation is found at N260 and N261. Residue N261 is the site of GPI-anchor amidated asparagine attachment. Residues 262–287 constitute a propeptide, removed in mature form; sequence SSNIASINKFVVLISATLVLSFAIFI.

It is found in the cell membrane. Its function is as follows. May play a role in the merozoite attachment to the erythrocyte. The protein is Merozoite surface protein 2 of Plasmodium falciparum (isolate FCR-3 / Gambia).